We begin with the raw amino-acid sequence, 225 residues long: Small ribosomal subunit protein uS3 (225 aa).

The 69-residue stretch at 38-106 folds into the KH type-2 domain; it reads LRGHLRKKLS…DVALNIVEIR (69 aa).

It belongs to the universal ribosomal protein uS3 family. Part of the 30S ribosomal subunit. Forms a tight complex with proteins S10 and S14.

In terms of biological role, binds the lower part of the 30S subunit head. Binds mRNA in the 70S ribosome, positioning it for translation. The chain is Small ribosomal subunit protein uS3 from Granulibacter bethesdensis (strain ATCC BAA-1260 / CGDNIH1).